A 245-amino-acid polypeptide reads, in one-letter code: tRNA (guanine-N(1)-)-methyltransferase (245 aa).

Residues Gly-114 and Ile-134–Leu-139 contribute to the S-adenosyl-L-methionine site.

It belongs to the RNA methyltransferase TrmD family. As to quaternary structure, homodimer.

The protein resides in the cytoplasm. The catalysed reaction is guanosine(37) in tRNA + S-adenosyl-L-methionine = N(1)-methylguanosine(37) in tRNA + S-adenosyl-L-homocysteine + H(+). In terms of biological role, specifically methylates guanosine-37 in various tRNAs. In Listeria monocytogenes serotype 4b (strain CLIP80459), this protein is tRNA (guanine-N(1)-)-methyltransferase.